A 325-amino-acid polypeptide reads, in one-letter code: MKNQLLDAKVASEEQETVLRPSLLNDFTGQNQMKSNLKIFITSSIERDESLDHTLLHGPPGLGKTTIAQIIAKEKNVNLKSTAGPILSKAADLAAILTNLQKNDVLFIDEIHRLNIHVEEILYSAMEDFSLDIMIGEGPSARSVKIYLPKFTLIGATTRLGLISKPLCDRFGIHLKLNFYSCEELTKIVERGAKVLNVALDTNAAIEIANRSRGTPRIALRLLKRVRDFGIYQNINPLNQQITDYALNQLGIDKLGLDSSDHKYLRFIAENYDGGPVGIDTIAAALSEQRDTIEEMIEPYLIQIGFVQRTQRGRVITANALKHLH.

The segment at 1–180 (MKNQLLDAKV…FGIHLKLNFY (180 aa)) is large ATPase domain (RuvB-L). ATP contacts are provided by residues Leu-19, Arg-20, Gly-61, Lys-64, Thr-65, Thr-66, 127-129 (EDF), Arg-170, Tyr-180, and Arg-217. Thr-65 contacts Mg(2+). A small ATPAse domain (RuvB-S) region spans residues 181-251 (SCEELTKIVE…ITDYALNQLG (71 aa)). The tract at residues 254–325 (KLGLDSSDHK…ITANALKHLH (72 aa)) is head domain (RuvB-H). DNA is bound by residues Arg-290, Arg-309, and Arg-314.

The protein belongs to the RuvB family. Homohexamer. Forms an RuvA(8)-RuvB(12)-Holliday junction (HJ) complex. HJ DNA is sandwiched between 2 RuvA tetramers; dsDNA enters through RuvA and exits via RuvB. An RuvB hexamer assembles on each DNA strand where it exits the tetramer. Each RuvB hexamer is contacted by two RuvA subunits (via domain III) on 2 adjacent RuvB subunits; this complex drives branch migration. In the full resolvosome a probable DNA-RuvA(4)-RuvB(12)-RuvC(2) complex forms which resolves the HJ.

It localises to the cytoplasm. It catalyses the reaction ATP + H2O = ADP + phosphate + H(+). Its function is as follows. The RuvA-RuvB-RuvC complex processes Holliday junction (HJ) DNA during genetic recombination and DNA repair, while the RuvA-RuvB complex plays an important role in the rescue of blocked DNA replication forks via replication fork reversal (RFR). RuvA specifically binds to HJ cruciform DNA, conferring on it an open structure. The RuvB hexamer acts as an ATP-dependent pump, pulling dsDNA into and through the RuvAB complex. RuvB forms 2 homohexamers on either side of HJ DNA bound by 1 or 2 RuvA tetramers; 4 subunits per hexamer contact DNA at a time. Coordinated motions by a converter formed by DNA-disengaged RuvB subunits stimulates ATP hydrolysis and nucleotide exchange. Immobilization of the converter enables RuvB to convert the ATP-contained energy into a lever motion, pulling 2 nucleotides of DNA out of the RuvA tetramer per ATP hydrolyzed, thus driving DNA branch migration. The RuvB motors rotate together with the DNA substrate, which together with the progressing nucleotide cycle form the mechanistic basis for DNA recombination by continuous HJ branch migration. Branch migration allows RuvC to scan DNA until it finds its consensus sequence, where it cleaves and resolves cruciform DNA. This Orientia tsutsugamushi (strain Ikeda) (Rickettsia tsutsugamushi) protein is Holliday junction branch migration complex subunit RuvB.